The following is a 340-amino-acid chain: DNA-directed RNA polymerase subunit alpha (340 aa).

The segment at 1 to 233 is alpha N-terminal domain (alpha-NTD); the sequence is MVREEVAVST…DLFIPFLHAE (233 aa). Residues 266 to 340 form an alpha C-terminal domain (alpha-CTD) region; it reads KKEIALKCIF…GIDLPKNKRF (75 aa).

Belongs to the RNA polymerase alpha chain family. In plastids the minimal PEP RNA polymerase catalytic core is composed of four subunits: alpha, beta, beta', and beta''. When a (nuclear-encoded) sigma factor is associated with the core the holoenzyme is formed, which can initiate transcription.

It is found in the plastid. The protein resides in the chloroplast. The enzyme catalyses RNA(n) + a ribonucleoside 5'-triphosphate = RNA(n+1) + diphosphate. DNA-dependent RNA polymerase catalyzes the transcription of DNA into RNA using the four ribonucleoside triphosphates as substrates. The protein is DNA-directed RNA polymerase subunit alpha of Calycanthus floridus var. glaucus (Eastern sweetshrub).